Here is a 672-residue protein sequence, read N- to C-terminus: Acetyl-coenzyme A synthetase (672 aa).

Residues 217-220 (RRGK) and Thr335 contribute to the CoA site. Residues 411 to 413 (GEP), 435 to 440 (DTWWQT), Asp529, Arg544, and Arg555 each bind ATP. Mg(2+) contacts are provided by Val566, His568, and Ile571. Arg613 lines the CoA pocket. An N6-acetyllysine modification is found at Lys638.

The protein belongs to the ATP-dependent AMP-binding enzyme family. Mg(2+) serves as cofactor. Post-translationally, acetylated. Deacetylation by the SIR2-homolog deacetylase activates the enzyme. In terms of processing, the N-terminus is blocked.

The catalysed reaction is acetate + ATP + CoA = acetyl-CoA + AMP + diphosphate. Catalyzes the conversion of acetate into acetyl-CoA (AcCoA), an essential intermediate at the junction of anabolic and catabolic pathways. AcsA undergoes a two-step reaction. In the first half reaction, AcsA combines acetate with ATP to form acetyl-adenylate (AcAMP) intermediate. In the second half reaction, it can then transfer the acetyl group from AcAMP to the sulfhydryl group of CoA, forming the product AcCoA. The chain is Acetyl-coenzyme A synthetase from Methanothrix soehngenii (Methanosaeta concilii).